A 199-amino-acid polypeptide reads, in one-letter code: MTVKLVLASKSPFRSALLKNAGIEFSTASADIDERAVEAPLYESGATPEDVAQILAEAKAIDVSEKNPGAVVIGCDQTLSLGDEIFHKPHDMEAARRQLQKFSGKTHQLNSAVVLARDGKTLWRHVSIAHMTMRDLDAGFIGRYLGRVGDIALSSVGAYQVEGPGIQLFEKIDGDYFTIVGLPLLPLLAELRREKCIDG.

The active-site Proton acceptor is Asp76.

It belongs to the Maf family. YceF subfamily. The cofactor is a divalent metal cation.

Its subcellular location is the cytoplasm. It carries out the reaction N(7)-methyl-GTP + H2O = N(7)-methyl-GMP + diphosphate + H(+). Its function is as follows. Nucleoside triphosphate pyrophosphatase that hydrolyzes 7-methyl-GTP (m(7)GTP). May have a dual role in cell division arrest and in preventing the incorporation of modified nucleotides into cellular nucleic acids. The protein is 7-methyl-GTP pyrophosphatase (maf-2) of Brucella suis biovar 1 (strain 1330).